A 97-amino-acid chain; its full sequence is Protein YcgL (97 aa).

Residues 1-85 (MLCVIYRSSK…PPEDLLKQHL (85 aa)) form the YcgL domain.

This chain is Protein YcgL, found in Escherichia fergusonii (strain ATCC 35469 / DSM 13698 / CCUG 18766 / IAM 14443 / JCM 21226 / LMG 7866 / NBRC 102419 / NCTC 12128 / CDC 0568-73).